The following is a 226-amino-acid chain: Ribonuclease 3 (226 aa).

Residues 7 to 129 enclose the RNase III domain; it reads LPRLCRTLGY…IIGAIYLDSD (123 aa). Glu-42 is a Mg(2+) binding site. Residue Asp-46 is part of the active site. Residues Asp-115 and Glu-118 each contribute to the Mg(2+) site. The active site involves Glu-118. Residues 156–226 enclose the DRBM domain; sequence DAKTLLQEYL…AAQVLELLKK (71 aa).

The protein belongs to the ribonuclease III family. Homodimer. It depends on Mg(2+) as a cofactor.

The protein resides in the cytoplasm. It carries out the reaction Endonucleolytic cleavage to 5'-phosphomonoester.. Functionally, digests double-stranded RNA. Involved in the processing of primary rRNA transcript to yield the immediate precursors to the large and small rRNAs (23S and 16S). Processes some mRNAs, and tRNAs when they are encoded in the rRNA operon. Processes pre-crRNA and tracrRNA of type II CRISPR loci if present in the organism. The sequence is that of Ribonuclease 3 from Shewanella sp. (strain W3-18-1).